Here is a 60-residue protein sequence, read N- to C-terminus: Large ribosomal subunit protein uL30 (60 aa).

It belongs to the universal ribosomal protein uL30 family. As to quaternary structure, part of the 50S ribosomal subunit.

This chain is Large ribosomal subunit protein uL30, found in Cutibacterium acnes (strain DSM 16379 / KPA171202) (Propionibacterium acnes).